A 236-amino-acid chain; its full sequence is Lipoprotein B (236 aa).

Residues M1–S27 form the signal peptide. A lipid anchor (N-palmitoyl cysteine) is attached at C28. The S-diacylglycerol cysteine moiety is linked to residue C28. Disordered stretches follow at residues E35 to V112 and S134 to F236. Positions S43–F60 are enriched in polar residues. Over residues Q61–E74 the composition is skewed to basic and acidic residues. Polar residues-rich tracts occupy residues S75 to V112 and N143 to K157. Residues N158 to D175 are compositionally biased toward basic and acidic residues. The segment covering V193–S212 has biased composition (polar residues). Residues E215–E228 are compositionally biased toward basic and acidic residues.

The protein belongs to the M.pulmonis LipAB lipoprotein family.

The protein resides in the cell membrane. This Mycoplasmopsis pulmonis (strain UAB CTIP) (Mycoplasma pulmonis) protein is Lipoprotein B (lipB).